A 239-amino-acid polypeptide reads, in one-letter code: Lysophospholipase-like protein 1 (239 aa).

The residue at position 2 (Ala2) is an N-acetylalanine. Catalysis depends on charge relay system residues Ser125, Asp180, and His212.

The protein belongs to the AB hydrolase superfamily. AB hydrolase 2 family.

It is found in the cytoplasm. The protein resides in the cytosol. It carries out the reaction S-hexadecanoyl-L-cysteinyl-[protein] + H2O = L-cysteinyl-[protein] + hexadecanoate + H(+). Functionally, palmitoyl thioesterase that catalyzes depalmitoylation of CGAS and KCNMA1. Acts as a regulator of innate immunity by mediating depalmitoylation of CGAS, thereby preventing CGAS homodimerization and cyclic GMP-AMP synthase activity. Does not exhibit phospholipase nor triacylglycerol lipase activity, able to hydrolyze only short chain substrates due to its shallow active site. In Mus musculus (Mouse), this protein is Lysophospholipase-like protein 1.